The sequence spans 509 residues: Probable cytochrome P450 6a14 (509 aa).

C454 provides a ligand contact to heme.

Belongs to the cytochrome P450 family. The cofactor is heme.

It is found in the endoplasmic reticulum membrane. It localises to the microsome membrane. Functionally, may be involved in the metabolism of insect hormones and in the breakdown of synthetic insecticides. This Drosophila melanogaster (Fruit fly) protein is Probable cytochrome P450 6a14 (Cyp6a14).